Here is a 273-residue protein sequence, read N- to C-terminus: 4-hydroxybenzoate octaprenyltransferase (273 aa).

The next 8 helical transmembrane spans lie at 7 to 27 (IGIY…SEGF), 30 to 50 (LKLL…GCVI), 83 to 103 (FFVL…WLTI), 122 to 142 (WTYF…LMAF), 146 to 166 (LNEI…WTVI), 197 to 217 (LIIG…SNVF), 221 to 241 (ISYH…QYLI), and 253 to 273 (FLHN…SVGL).

The protein belongs to the UbiA prenyltransferase family. Mg(2+) serves as cofactor.

Its subcellular location is the cell inner membrane. It carries out the reaction all-trans-octaprenyl diphosphate + 4-hydroxybenzoate = 4-hydroxy-3-(all-trans-octaprenyl)benzoate + diphosphate. It functions in the pathway cofactor biosynthesis; ubiquinone biosynthesis. Catalyzes the prenylation of para-hydroxybenzoate (PHB) with an all-trans polyprenyl group. Mediates the second step in the final reaction sequence of ubiquinone-8 (UQ-8) biosynthesis, which is the condensation of the polyisoprenoid side chain with PHB, generating the first membrane-bound Q intermediate 3-octaprenyl-4-hydroxybenzoate. This chain is 4-hydroxybenzoate octaprenyltransferase, found in Vesicomyosocius okutanii subsp. Calyptogena okutanii (strain HA).